Here is a 62-residue protein sequence, read N- to C-terminus: Large ribosomal subunit protein bL28 (62 aa).

Positions 1–23 (MGKQCYVTGRKASTGNRRSHALN) are disordered.

The protein belongs to the bacterial ribosomal protein bL28 family.

This is Large ribosomal subunit protein bL28 from Staphylococcus carnosus (strain TM300).